Consider the following 347-residue polypeptide: Biotin synthase (347 aa).

The Radical SAM core domain maps to 40 to 258 (AQVQVSTLLS…IAVARIAMPR (219 aa)). Positions 55, 59, and 62 each coordinate [4Fe-4S] cluster. [2Fe-2S] cluster is bound by residues cysteine 99, cysteine 130, cysteine 190, and arginine 262.

Belongs to the radical SAM superfamily. Biotin synthase family. In terms of assembly, homodimer. [4Fe-4S] cluster is required as a cofactor. [2Fe-2S] cluster serves as cofactor.

The enzyme catalyses (4R,5S)-dethiobiotin + (sulfur carrier)-SH + 2 reduced [2Fe-2S]-[ferredoxin] + 2 S-adenosyl-L-methionine = (sulfur carrier)-H + biotin + 2 5'-deoxyadenosine + 2 L-methionine + 2 oxidized [2Fe-2S]-[ferredoxin]. It participates in cofactor biosynthesis; biotin biosynthesis; biotin from 7,8-diaminononanoate: step 2/2. Catalyzes the conversion of dethiobiotin (DTB) to biotin by the insertion of a sulfur atom into dethiobiotin via a radical-based mechanism. This Stenotrophomonas maltophilia (strain K279a) protein is Biotin synthase.